A 194-amino-acid chain; its full sequence is Oligoribonuclease (194 aa).

The Exonuclease domain occupies 11–174; sequence LIWIDLEMTG…SDVRDSIDEL (164 aa). Y132 is a catalytic residue.

This sequence belongs to the oligoribonuclease family.

Its subcellular location is the cytoplasm. Its function is as follows. 3'-to-5' exoribonuclease specific for small oligoribonucleotides. The chain is Oligoribonuclease from Xanthomonas campestris pv. campestris (strain ATCC 33913 / DSM 3586 / NCPPB 528 / LMG 568 / P 25).